The following is a 419-amino-acid chain: Histidine--tRNA ligase (419 aa).

It belongs to the class-II aminoacyl-tRNA synthetase family. In terms of assembly, homodimer.

It is found in the cytoplasm. The catalysed reaction is tRNA(His) + L-histidine + ATP = L-histidyl-tRNA(His) + AMP + diphosphate + H(+). The polypeptide is Histidine--tRNA ligase (Syntrophotalea carbinolica (strain DSM 2380 / NBRC 103641 / GraBd1) (Pelobacter carbinolicus)).